Consider the following 84-residue polypeptide: uncharacterized protein (84 aa).

A run of 2 helical transmembrane segments spans residues H7–I27 and I52–C72.

The protein localises to the membrane. This is an uncharacterized protein from Saccharomyces cerevisiae (strain ATCC 204508 / S288c) (Baker's yeast).